The chain runs to 478 residues: FERM domain-containing protein B (478 aa).

3 disordered regions span residues 19–39, 129–196, and 202–221; these read ELIPTQSQGSPSLSSSSTITS, EENS…GFLT, and KAQSPQLQSQSSSLSTTIAS. Composition is skewed to low complexity over residues 22–39 and 129–164; these read PTQSQGSPSLSSSSTITS and EENSPSSSTSSPILSGLSSIRGKKSNASSTSNANDG. An FERM domain is found at 48–468; the sequence is VLIRIYFIDD…DWSEEWESKE (421 aa). The segment covering 165-179 has biased composition (gly residues); the sequence is SGSGSGSGSGSGSGS. Low complexity-rich tracts occupy residues 180–189 and 204–216; these read GTSTPNSPKG and QSPQLQSQSSSLS.

This is FERM domain-containing protein B (frmB) from Dictyostelium discoideum (Social amoeba).